A 479-amino-acid polypeptide reads, in one-letter code: UDP-N-acetylmuramate--L-alanine ligase (479 aa).

126–132 (GTHGKTT) serves as a coordination point for ATP.

This sequence belongs to the MurCDEF family.

It is found in the cytoplasm. It catalyses the reaction UDP-N-acetyl-alpha-D-muramate + L-alanine + ATP = UDP-N-acetyl-alpha-D-muramoyl-L-alanine + ADP + phosphate + H(+). Its pathway is cell wall biogenesis; peptidoglycan biosynthesis. In terms of biological role, cell wall formation. The chain is UDP-N-acetylmuramate--L-alanine ligase from Alkalilimnicola ehrlichii (strain ATCC BAA-1101 / DSM 17681 / MLHE-1).